Reading from the N-terminus, the 156-residue chain is Small ribosomal subunit protein uS7 (156 aa).

It belongs to the universal ribosomal protein uS7 family. Part of the 30S ribosomal subunit. Contacts proteins S9 and S11.

In terms of biological role, one of the primary rRNA binding proteins, it binds directly to 16S rRNA where it nucleates assembly of the head domain of the 30S subunit. Is located at the subunit interface close to the decoding center, probably blocks exit of the E-site tRNA. This chain is Small ribosomal subunit protein uS7, found in Anoxybacillus flavithermus (strain DSM 21510 / WK1).